Consider the following 424-residue polypeptide: Histidine--tRNA ligase (424 aa).

This sequence belongs to the class-II aminoacyl-tRNA synthetase family. Homodimer.

Its subcellular location is the cytoplasm. It catalyses the reaction tRNA(His) + L-histidine + ATP = L-histidyl-tRNA(His) + AMP + diphosphate + H(+). This is Histidine--tRNA ligase from Shigella dysenteriae serotype 1 (strain Sd197).